The primary structure comprises 370 residues: Vasopressin V2 receptor (370 aa).

Over residues 1–21 (MFMASTTSAVPWHLSQPTPAG) the composition is skewed to polar residues. Positions 1 to 26 (MFMASTTSAVPWHLSQPTPAGNGSEG) are disordered. Residues 1–38 (MFMASTTSAVPWHLSQPTPAGNGSEGELLTARDPLLAQ) are Extracellular-facing. N-linked (GlcNAc...) asparagine glycosylation occurs at Asn-22. Residues 39–63 (AELALLSTVFVAVALSNGLVLGALV) form a helical membrane-spanning segment. Residues 64–77 (RRGRRGRWAPMHVF) lie on the Cytoplasmic side of the membrane. The chain crosses the membrane as a helical span at residues 78 to 98 (IGHLCLADLAVALFQVLPQLA). The Extracellular segment spans residues 99-113 (WDATDRFRGPDALCR). Residues 114–135 (AVKYLQMVGMYASSYMILAMTL) form a helical membrane-spanning segment. The Cytoplasmic portion of the chain corresponds to 136–159 (DRHRAICRPMLAHRHGGGTHWNRP). The helical transmembrane segment at 160–180 (VLLAWAFSLLFSLPQLFIFAQ) threads the bilayer. Residues 181–199 (RDVDGSGVLDCWARFAEPW) lie on the Extracellular side of the membrane. Residues 200 to 219 (GLRAYVTWIALMVFVAPALG) form a helical membrane-spanning segment. Over 220–270 (IAACQVLIFREIHASLGPGPVPRAGGPRRGCRPGSPAEGARVSAAVAKTVK) the chain is Cytoplasmic. A helical transmembrane segment spans residues 271–292 (MTLVIVIVYVLCWAPFFLVQLW). The Extracellular segment spans residues 293-307 (AAWDPEAPREGPPFV). A helical membrane pass occupies residues 308–327 (LLMLLASLNSCTNPWIYASF). The Cytoplasmic segment spans residues 328–370 (SSSISSELRSLLCCTWRRAPPSPGPQEESCATASSFLAKDTPS). 2 S-palmitoyl cysteine lipidation sites follow: Cys-340 and Cys-341. Positions 347–370 (PPSPGPQEESCATASSFLAKDTPS) are disordered.

This sequence belongs to the G-protein coupled receptor 1 family. Vasopressin/oxytocin receptor subfamily. In terms of assembly, interacts with ARRDC4. Identified in a complex containing at least ARRDC4, V2R and HGS. Interacts with TMEM147.

It is found in the cell membrane. Functionally, receptor for arginine vasopressin. The activity of this receptor is mediated by G proteins which activate adenylate cyclase. Involved in renal water reabsorption. This is Vasopressin V2 receptor (AVPR2) from Bos taurus (Bovine).